The following is a 286-amino-acid chain: Glycine--tRNA ligase alpha subunit (286 aa).

It belongs to the class-II aminoacyl-tRNA synthetase family. Tetramer of two alpha and two beta subunits.

Its subcellular location is the cytoplasm. It catalyses the reaction tRNA(Gly) + glycine + ATP = glycyl-tRNA(Gly) + AMP + diphosphate. The protein is Glycine--tRNA ligase alpha subunit of Campylobacter concisus (strain 13826).